Here is a 445-residue protein sequence, read N- to C-terminus: Arginine biosynthesis bifunctional protein ArgJ, mitochondrial (445 aa).

The substrate site is built by Thr-189, Lys-215, Thr-226, Glu-312, Asn-440, and Ser-445. Residue Thr-226 is the Nucleophile of the active site.

Belongs to the ArgJ family. Heterodimer of an alpha and a beta chain. In terms of processing, the alpha and beta chains are autoproteolytically processed from a single precursor protein within the mitochondrion.

The protein resides in the mitochondrion matrix. It carries out the reaction N(2)-acetyl-L-ornithine + L-glutamate = N-acetyl-L-glutamate + L-ornithine. It catalyses the reaction L-glutamate + acetyl-CoA = N-acetyl-L-glutamate + CoA + H(+). The protein operates within amino-acid biosynthesis; L-arginine biosynthesis; L-ornithine and N-acetyl-L-glutamate from L-glutamate and N(2)-acetyl-L-ornithine (cyclic): step 1/1. It functions in the pathway amino-acid biosynthesis; L-arginine biosynthesis; N(2)-acetyl-L-ornithine from L-glutamate: step 1/4. In terms of biological role, catalyzes two activities which are involved in the cyclic version of arginine biosynthesis: the synthesis of acetylglutamate from glutamate and acetyl-CoA, and of ornithine by transacetylation between acetylornithine and glutamate. The protein is Arginine biosynthesis bifunctional protein ArgJ, mitochondrial of Schizosaccharomyces pombe (strain 972 / ATCC 24843) (Fission yeast).